The chain runs to 1135 residues: MNNDIILVVNQIEQALSLLHDPKSNNKQREESQVFLEEIKTRANAHSYAIAIITTSNNDILKHFALHIIETLVKNRWYECNDQERELIKKEILELMRRITSNEPKFIKEKLVTILVDVIKRDWPQRWMNLLTSLIEISKISDTQTELVLSTFGLLPHDIIFDTGSTSQVLSDQRRKDLMAGINLAVTSLFEYFYQLLESKYTQYKQPTPATTTTPQQTKQVIHLINVLLTTLRSYIEWVPSKVIFDHKLDQIFCQLILDVPFRMGACENLILFLGRKGRPDERIELIQTPFNFMENFLNSIKINSDFEDDYSFHKRITQALTILGTVHLNAYDDKHKIPNNYNIYLQLMLQMVSHPSILLSSFVLPFWHTFIKVESLELSYLEEVIKQIMETMLVKFVRIGDPEKSDSEQSKYSEIDFGTSKEWSNFFGGVRTRYLDIIKLITIQRREMAYIFIATKVADVLDALKANLNVASLSHEQTLVLESHSHILDSILLNIKDFTPESSLFFNKEQQQQPNIIQLTDRVLNLLFEINSTEPNITSFQIDCLQAYILYYQTNPESIKFLLNKIVPLIPFPGLDNPNRSFQNSVLHTRRRAISSLIGISTNISHLMKPYFDILYKSVVELFQKNVVTETEKVMLFHLLIVFSNNLPSYQQTLDFYKGILTPIIEQWVSLEMSTALSSPDAFIQYLGLSIADSQNLDATLVSRRKNIQYVASTLQIFWKKSQIPTNSSDELFAPFISNGISYNGKWPISSFVKQVLPGVLSLTRTLHQLWMPEHRAKIHPSLSTIFNLDDSITAPLLGFEYHKEQKSESSNVTFLRNILDCLRDACYEIVGYGFNHSDELFSLPDLPLVLLDSVFSYLESIENRHLKLLVKHILNYLIKNCPTKLEHTIFEPILPLLFSVLFNRIKAGWELIKLRSQKGEKENEKNEIVEDKILRDVSMEFLMCCSNIITQSPNYIFSSIDVMTPMVYGISSCLMAMDTPILKKSLIVSTQLLVDHEKVNDPKFFKLIGSEMFGCCIKILIVNKFAEFSNDIQSIIRLIYMKYYQICNYPQEILLSLPNITPPILQAFNKDLISTRSEKSQKVLFKKLLQDVIGIPLNKLKKESILDLPEKLFISKISDQSNENISNISNLFN.

The region spanning 32–117 is the Importin N-terminal domain; it reads SQVFLEEIKT…KEKLVTILVD (86 aa). The pre-siRNA binding stretch occupies residues 630-631; it reads TE.

This sequence belongs to the exportin family. In terms of assembly, found in a nuclear export complex with RanGTP, exportin and pre-miRNA.

It localises to the nucleus. The protein localises to the cytoplasm. In terms of biological role, mediates the nuclear export of proteins bearing a double-stranded RNA binding domain (dsRBD) and double-stranded RNAs (cargos). Functionally, mediates the nuclear export of micro-RNA precursors, which form short hairpins. This is Exportin-5 (xpo5) from Dictyostelium discoideum (Social amoeba).